The chain runs to 346 residues: Methylthioribose-1-phosphate isomerase (346 aa).

Substrate contacts are provided by residues 46–48 (RGA), Arg-89, and Gln-196. The active-site Proton donor is the Asp-237. 247-248 (NK) is a binding site for substrate.

It belongs to the eIF-2B alpha/beta/delta subunits family. MtnA subfamily.

It catalyses the reaction 5-(methylsulfanyl)-alpha-D-ribose 1-phosphate = 5-(methylsulfanyl)-D-ribulose 1-phosphate. It participates in amino-acid biosynthesis; L-methionine biosynthesis via salvage pathway; L-methionine from S-methyl-5-thio-alpha-D-ribose 1-phosphate: step 1/6. Its function is as follows. Catalyzes the interconversion of methylthioribose-1-phosphate (MTR-1-P) into methylthioribulose-1-phosphate (MTRu-1-P). This Geobacter sp. (strain M21) protein is Methylthioribose-1-phosphate isomerase.